A 175-amino-acid chain; its full sequence is Disulfide bond formation protein B (175 aa).

Residues 1–13 (MTAFTRFAHSRAS) are Cytoplasmic-facing. Residues 14–30 (WLILTGSAIALEAAALY) form a helical membrane-spanning segment. At 31-48 (FQYVMKLDPCVMCIYQRL) the chain is on the periplasmic side. Cys-40 and Cys-43 are oxidised to a cystine. Residues 49-64 (AVFGILAAGLIGMTAP) traverse the membrane as a helical segment. At 65–71 (KYRIVRI) the chain is on the cytoplasmic side. The helical transmembrane segment at 72 to 89 (LGALGWAVSATWGLKLAL) threads the bilayer. Over 90 to 144 (ALVDMQNNPSPFSTCSFLPEFPAWMPLHEWFPSVMLPTGMCTDVPWQFMGVTMAE) the chain is Periplasmic. Residues Cys-104 and Cys-130 are joined by a disulfide bond. The helical transmembrane segment at 145-163 (WMVVAFSGYLVALLLFIVP) threads the bilayer. Residues 164-175 (ILSGSNKPSLYK) are Cytoplasmic-facing.

It belongs to the DsbB family.

Its subcellular location is the cell inner membrane. In terms of biological role, required for disulfide bond formation in some periplasmic proteins. Acts by oxidizing the DsbA protein. This chain is Disulfide bond formation protein B, found in Shewanella sp. (strain MR-4).